The primary structure comprises 148 residues: Large-conductance mechanosensitive channel (148 aa).

2 consecutive transmembrane segments (helical) span residues 14–34 (VVDM…INTL) and 85–105 (GIFV…FLSV).

The protein belongs to the MscL family. In terms of assembly, homopentamer.

It localises to the cell inner membrane. Its function is as follows. Channel that opens in response to stretch forces in the membrane lipid bilayer. May participate in the regulation of osmotic pressure changes within the cell. This Chlorobium phaeobacteroides (strain DSM 266 / SMG 266 / 2430) protein is Large-conductance mechanosensitive channel.